A 110-amino-acid chain; its full sequence is Ribonuclease P protein component 1 (110 aa).

The protein belongs to the eukaryotic/archaeal RNase P protein component 1 family. As to quaternary structure, consists of a catalytic RNA component and at least 4-5 protein subunits.

It is found in the cytoplasm. It carries out the reaction Endonucleolytic cleavage of RNA, removing 5'-extranucleotides from tRNA precursor.. In terms of biological role, part of ribonuclease P, a protein complex that generates mature tRNA molecules by cleaving their 5'-ends. The sequence is that of Ribonuclease P protein component 1 from Methanosarcina acetivorans (strain ATCC 35395 / DSM 2834 / JCM 12185 / C2A).